The sequence spans 482 residues: Anaerobic nitric oxide reductase flavorubredoxin (482 aa).

The tract at residues 30-210 is zinc metallo-hydrolase; sequence LRGSSYNSYL…PFSRLVTPKI (181 aa). Fe cation-binding residues include His79, Glu81, Asp83, His147, Asp166, and His227. The Flavodoxin-like domain maps to 254-393; sequence ITLFYDTMSN…ICRQHGREIA (140 aa). FMN-binding positions include 260 to 264 and 342 to 369; these read TMSNN and AFGSHGWSGGAVDRLSTRLQDAGFEMSM. In terms of domain architecture, Rubredoxin-like spans 426 to 477; it reads GPCMQCSVCQWVYDPALGEPLQDVAPGTPWSDVPDNFLCPECSLGKDVFDVL. Residues Cys431, Cys434, Cys464, and Cys467 each coordinate Fe cation.

This sequence in the N-terminal section; belongs to the zinc metallo-hydrolase group 3 family. Homotetramer. The cofactor is Fe cation. FMN is required as a cofactor.

It is found in the cytoplasm. Its pathway is nitrogen metabolism; nitric oxide reduction. Anaerobic nitric oxide reductase; uses NADH to detoxify nitric oxide (NO), protecting several 4Fe-4S NO-sensitive enzymes. Has at least 2 reductase partners, only one of which (NorW, flavorubredoxin reductase) has been identified. NO probably binds to the di-iron center; electrons enter from the NorW at rubredoxin and are transferred sequentially to the FMN center and the di-iron center. Also able to function as an aerobic oxygen reductase. The polypeptide is Anaerobic nitric oxide reductase flavorubredoxin (Enterobacter sp. (strain 638)).